The sequence spans 129 residues: Small ribosomal subunit protein uS11 (129 aa).

Belongs to the universal ribosomal protein uS11 family. In terms of assembly, part of the 30S ribosomal subunit. Interacts with proteins S7 and S18. Binds to IF-3.

Its function is as follows. Located on the platform of the 30S subunit, it bridges several disparate RNA helices of the 16S rRNA. Forms part of the Shine-Dalgarno cleft in the 70S ribosome. The polypeptide is Small ribosomal subunit protein uS11 (Pectobacterium atrosepticum (strain SCRI 1043 / ATCC BAA-672) (Erwinia carotovora subsp. atroseptica)).